The following is a 119-amino-acid chain: NADH-quinone oxidoreductase subunit A (119 aa).

Helical transmembrane passes span 7–27 (FPVL…VSIG), 63–83 (LVAI…PWGV), and 88–108 (IGWP…LGFA).

This sequence belongs to the complex I subunit 3 family. In terms of assembly, NDH-1 is composed of 14 different subunits. Subunits NuoA, H, J, K, L, M, N constitute the membrane sector of the complex.

It localises to the cell inner membrane. It carries out the reaction a quinone + NADH + 5 H(+)(in) = a quinol + NAD(+) + 4 H(+)(out). NDH-1 shuttles electrons from NADH, via FMN and iron-sulfur (Fe-S) centers, to quinones in the respiratory chain. The immediate electron acceptor for the enzyme in this species is believed to be ubiquinone. Couples the redox reaction to proton translocation (for every two electrons transferred, four hydrogen ions are translocated across the cytoplasmic membrane), and thus conserves the redox energy in a proton gradient. The polypeptide is NADH-quinone oxidoreductase subunit A (Paraburkholderia xenovorans (strain LB400)).